The chain runs to 417 residues: Serine hydroxymethyltransferase 1 (417 aa).

(6S)-5,6,7,8-tetrahydrofolate is bound by residues Leu-121 and 125–127 (GHL). Lys-230 carries the post-translational modification N6-(pyridoxal phosphate)lysine. 355-357 (SPF) contacts (6S)-5,6,7,8-tetrahydrofolate.

This sequence belongs to the SHMT family. In terms of assembly, homodimer. It depends on pyridoxal 5'-phosphate as a cofactor.

Its subcellular location is the cytoplasm. It catalyses the reaction (6R)-5,10-methylene-5,6,7,8-tetrahydrofolate + glycine + H2O = (6S)-5,6,7,8-tetrahydrofolate + L-serine. The protein operates within one-carbon metabolism; tetrahydrofolate interconversion. It functions in the pathway amino-acid biosynthesis; glycine biosynthesis; glycine from L-serine: step 1/1. In terms of biological role, catalyzes the reversible interconversion of serine and glycine with tetrahydrofolate (THF) serving as the one-carbon carrier. This reaction serves as the major source of one-carbon groups required for the biosynthesis of purines, thymidylate, methionine, and other important biomolecules. Also exhibits THF-independent aldolase activity toward beta-hydroxyamino acids, producing glycine and aldehydes, via a retro-aldol mechanism. This is Serine hydroxymethyltransferase 1 from Pseudomonas aeruginosa (strain ATCC 15692 / DSM 22644 / CIP 104116 / JCM 14847 / LMG 12228 / 1C / PRS 101 / PAO1).